Consider the following 320-residue polypeptide: Acetyl-coenzyme A carboxylase carboxyl transferase subunit alpha (320 aa).

A CoA carboxyltransferase C-terminal domain is found at 33–294; sequence AFESEIQALR…GDAVEDELKA (262 aa).

It belongs to the AccA family. Acetyl-CoA carboxylase is a heterohexamer composed of biotin carboxyl carrier protein (AccB), biotin carboxylase (AccC) and two subunits each of ACCase subunit alpha (AccA) and ACCase subunit beta (AccD).

Its subcellular location is the cytoplasm. The catalysed reaction is N(6)-carboxybiotinyl-L-lysyl-[protein] + acetyl-CoA = N(6)-biotinyl-L-lysyl-[protein] + malonyl-CoA. It participates in lipid metabolism; malonyl-CoA biosynthesis; malonyl-CoA from acetyl-CoA: step 1/1. In terms of biological role, component of the acetyl coenzyme A carboxylase (ACC) complex. First, biotin carboxylase catalyzes the carboxylation of biotin on its carrier protein (BCCP) and then the CO(2) group is transferred by the carboxyltransferase to acetyl-CoA to form malonyl-CoA. This chain is Acetyl-coenzyme A carboxylase carboxyl transferase subunit alpha, found in Caulobacter sp. (strain K31).